A 449-amino-acid chain; its full sequence is Glucose-6-phosphate isomerase (449 aa).

Glu291 (proton donor) is an active-site residue. Active-site residues include His312 and Lys426.

The protein belongs to the GPI family.

The protein resides in the cytoplasm. The enzyme catalyses alpha-D-glucose 6-phosphate = beta-D-fructose 6-phosphate. It participates in carbohydrate biosynthesis; gluconeogenesis. The protein operates within carbohydrate degradation; glycolysis; D-glyceraldehyde 3-phosphate and glycerone phosphate from D-glucose: step 2/4. Functionally, catalyzes the reversible isomerization of glucose-6-phosphate to fructose-6-phosphate. The polypeptide is Glucose-6-phosphate isomerase (Pediococcus pentosaceus (strain ATCC 25745 / CCUG 21536 / LMG 10740 / 183-1w)).